Consider the following 108-residue polypeptide: MQLSPQEKDKLMIFTAALLAEKRKEKGIKLNYPEAVAYISAAILEGAREGKTVAELMSYGRTVLNQNEVMEGISEMIEEVQVEATFPDGTKLVTVHNPIIIKENDLAE.

Belongs to the urease gamma subunit family. Heterotrimer of UreA (gamma), UreB (beta) and UreC (alpha) subunits. Three heterotrimers associate to form the active enzyme.

It localises to the cytoplasm. The catalysed reaction is urea + 2 H2O + H(+) = hydrogencarbonate + 2 NH4(+). It functions in the pathway nitrogen metabolism; urea degradation; CO(2) and NH(3) from urea (urease route): step 1/1. The protein is Urease subunit gamma of Trichodesmium erythraeum (strain IMS101).